The sequence spans 164 residues: ATP synthase subunit b (164 aa).

The chain crosses the membrane as a helical span at residues 10–32 (SAAMLMLFVLMVYFLNKFLYTPF).

Belongs to the ATPase B chain family. F-type ATPases have 2 components, F(1) - the catalytic core - and F(0) - the membrane proton channel. F(1) has five subunits: alpha(3), beta(3), gamma(1), delta(1), epsilon(1). F(0) has three main subunits: a(1), b(2) and c(10-14). The alpha and beta chains form an alternating ring which encloses part of the gamma chain. F(1) is attached to F(0) by a central stalk formed by the gamma and epsilon chains, while a peripheral stalk is formed by the delta and b chains.

Its subcellular location is the cell inner membrane. In terms of biological role, f(1)F(0) ATP synthase produces ATP from ADP in the presence of a proton or sodium gradient. F-type ATPases consist of two structural domains, F(1) containing the extramembraneous catalytic core and F(0) containing the membrane proton channel, linked together by a central stalk and a peripheral stalk. During catalysis, ATP synthesis in the catalytic domain of F(1) is coupled via a rotary mechanism of the central stalk subunits to proton translocation. Its function is as follows. Component of the F(0) channel, it forms part of the peripheral stalk, linking F(1) to F(0). In Thermotoga maritima (strain ATCC 43589 / DSM 3109 / JCM 10099 / NBRC 100826 / MSB8), this protein is ATP synthase subunit b.